A 564-amino-acid chain; its full sequence is Dihydropyrimidinase-related protein 5 (564 aa).

Phosphothreonine is present on residues Thr-509 and Thr-514. Phosphoserine occurs at positions 532 and 538. Residue Arg-559 is modified to Omega-N-methylarginine.

It belongs to the metallo-dependent hydrolases superfamily. Hydantoinase/dihydropyrimidinase family. Homotetramer, and heterotetramer with other DPYS-like proteins. Interacts with DPYSL2, DPYSL3 and DPYSL4. Interacts with MAP2 and TUBB3. Highly expressed in embryonic and early postnatal brain and spinal cord.

Its subcellular location is the cytoplasm. Involved in the negative regulation of dendrite outgrowth. The sequence is that of Dihydropyrimidinase-related protein 5 (Dpysl5) from Rattus norvegicus (Rat).